Consider the following 149-residue polypeptide: 3-hydroxyacyl-[acyl-carrier-protein] dehydratase FabZ (149 aa).

His53 is a catalytic residue.

This sequence belongs to the thioester dehydratase family. FabZ subfamily.

Its subcellular location is the cytoplasm. It catalyses the reaction a (3R)-hydroxyacyl-[ACP] = a (2E)-enoyl-[ACP] + H2O. Involved in unsaturated fatty acids biosynthesis. Catalyzes the dehydration of short chain beta-hydroxyacyl-ACPs and long chain saturated and unsaturated beta-hydroxyacyl-ACPs. The protein is 3-hydroxyacyl-[acyl-carrier-protein] dehydratase FabZ of Polynucleobacter necessarius subsp. necessarius (strain STIR1).